The sequence spans 556 residues: MTAPIWMASPPEVHSALLSSGPGPGPLLVSAEGWHSLSIAYAETADELAALLAAVQAGTWDGPTAAVYVAAHTPYLAWLVQASANSAAMATRQETAATAYGTALAAMPTLAELGANHALHGVLMATNFFGINTIPIALNESDYARMWIQAATTMASYQAVSTAAVAAAPQTTPAPQIVKANAPTAASDEPNQVQEWLQWLQKIGYTDFYNNVIQPFINWLTNLPFLQAMFSGFDPWLPSLGNPLTFLSPANIAFALGYPMDIGSYVAFLSQTFAFIGADLAAAFASGNPATIAFTLMFTTVEAIGTIITDTIALVKTLLEQTLALLPAALPLLAAPLAPLTLAPASAAGGFAGLSGLAGLVGIPPSAPPVIPPVAAIAPSIPTPTPTPAPAPAPTAVTAPTPPPGPPPPPVTAPPPVTGAGIQSFGYLVGDLNSAAQARKAVGTGVRKKTPEPDSAEAPAAAAAPEEQVQPQRRRRPKIKQLGRGYEYLDLDPETGHDPTGSPQGAGTLGFAGTTHKASPGQVAGLITLPNDAFGGSPRTPMMPGTWDTDSATRVE.

Positions 8 to 164 are PPE; sequence ASPPEVHSAL…ASYQAVSTAA (157 aa). Residues 201-256 are SH3-like; that stretch reads QKIGYTDFYNNVIQPFINWLTNLPFLQAMFSGFDPWLPSLGNPLTFLSPANIAFAL. The tract at residues 319 to 340 is leucine zipper motif; it reads LEQTLALLPAALPLLAAPLAPL. Disordered stretches follow at residues 385-418 and 443-556; these read TPTPAPAPAPTAVTAPTPPPGPPPPPVTAPPPVT and GTGV…TRVE. Positions 400-417 are enriched in pro residues; sequence PTPPPGPPPPPVTAPPPV. Residues 456-471 show a composition bias toward low complexity; it reads AEAPAAAAAPEEQVQP. Basic residues predominate over residues 472 to 481; sequence QRRRRPKIKQ. The short motif at 473–481 is the Nuclear localization signal element; the sequence is RRRRPKIKQ.

The protein belongs to the mycobacterial PPE family.

The protein resides in the secreted. Its subcellular location is the host cytoplasm. The protein localises to the host nucleus. Functionally, inhibits nitric oxide (NO) production in activated macrophages. Acts by inhibiting expression of the host inducible nitric oxide synthase (iNOS). PPE2 is translocated into the host macrophage nucleus, where it interacts with a GATA-binding site overlapping with the TATA box of NOS2 (iNOS) promoter, and strongly inhibits NOS2 gene transcription. Reduction in NO production in turn facilitates intracellular survival of the bacilli inside the macrophage. In addition, disrupts the assembly of NADPH oxidase complex, which inhibits NADPH oxidase-mediated reactive oxygen species (ROS) generation in macrophages and favors M.tuberculosis survival. Acts by interacting with NCF2, the cytosolic subunit of NADPH oxidase, and preventing translocation of NCF2 and NCF1 to the membrane, which causes a reduction of the functional assembly of NADPH oxidase complex and a decrease in NADPH oxidase activity. This Mycobacterium tuberculosis (strain ATCC 25618 / H37Rv) protein is PPE family protein PPE2 (PPE2).